Reading from the N-terminus, the 335-residue chain is Nicotinate-nucleotide--dimethylbenzimidazole phosphoribosyltransferase (335 aa).

Catalysis depends on Glu-304, which acts as the Proton acceptor.

Belongs to the CobT family.

The catalysed reaction is 5,6-dimethylbenzimidazole + nicotinate beta-D-ribonucleotide = alpha-ribazole 5'-phosphate + nicotinate + H(+). The protein operates within nucleoside biosynthesis; alpha-ribazole biosynthesis; alpha-ribazole from 5,6-dimethylbenzimidazole: step 1/2. Catalyzes the synthesis of alpha-ribazole-5'-phosphate from nicotinate mononucleotide (NAMN) and 5,6-dimethylbenzimidazole (DMB). The polypeptide is Nicotinate-nucleotide--dimethylbenzimidazole phosphoribosyltransferase (Thermus thermophilus (strain ATCC 27634 / DSM 579 / HB8)).